The following is a 158-amino-acid chain: Cyclic pyranopterin monophosphate synthase (158 aa).

Residues 75–77 and 113–114 contribute to the substrate site; these read LCH and ME. The active site involves aspartate 128.

This sequence belongs to the MoaC family. In terms of assembly, homohexamer; trimer of dimers.

The catalysed reaction is (8S)-3',8-cyclo-7,8-dihydroguanosine 5'-triphosphate = cyclic pyranopterin phosphate + diphosphate. Its pathway is cofactor biosynthesis; molybdopterin biosynthesis. Its function is as follows. Catalyzes the conversion of (8S)-3',8-cyclo-7,8-dihydroguanosine 5'-triphosphate to cyclic pyranopterin monophosphate (cPMP). The sequence is that of Cyclic pyranopterin monophosphate synthase from Dinoroseobacter shibae (strain DSM 16493 / NCIMB 14021 / DFL 12).